Here is a 31-residue protein sequence, read N- to C-terminus: MAILISYFCFLLIFFLFTLILFFGLNKIRLI.

A helical membrane pass occupies residues 3–23 (ILISYFCFLLIFFLFTLILFF).

It belongs to the PetL family. The 4 large subunits of the cytochrome b6-f complex are cytochrome b6, subunit IV (17 kDa polypeptide, PetD), cytochrome f and the Rieske protein, while the 4 small subunits are PetG, PetL, PetM and PetN. The complex functions as a dimer.

The protein localises to the plastid. The protein resides in the chloroplast thylakoid membrane. In terms of biological role, component of the cytochrome b6-f complex, which mediates electron transfer between photosystem II (PSII) and photosystem I (PSI), cyclic electron flow around PSI, and state transitions. PetL is important for photoautotrophic growth as well as for electron transfer efficiency and stability of the cytochrome b6-f complex. This chain is Cytochrome b6-f complex subunit 6, found in Gnetum parvifolium (Small-leaved jointfir).